The chain runs to 386 residues: Hemagglutinin-esterase (386 aa).

The signal sequence occupies residues 1-11; sequence MLIIFLFFYFC. Positions 1–121 are esterase domain 1; the sequence is MLIIFLFFYF…SNDVWLLNKV (121 aa). The Virion surface portion of the chain corresponds to 12–359; that stretch reads YGFNEPLNVV…PICVYDFLPI (348 aa). The Nucleophile role is filled by serine 34. An intrachain disulfide couples cysteine 38 to cysteine 59. Asparagine 83, asparagine 110, asparagine 145, and asparagine 168 each carry an N-linked (GlcNAc...) asparagine; by host glycan. Cysteine 107 and cysteine 154 are oxidised to a cystine. Positions 122-236 are receptor binding; the sequence is RFYRALYSNM…GSYKVSTTAP (115 aa). 3 disulfide bridges follow: cysteine 180/cysteine 246, cysteine 188/cysteine 219, and cysteine 277/cysteine 282. Positions 237-349 are esterase domain 2; sequence FLSLPTKALC…RCPTSSIIKH (113 aa). A glycan (N-linked (GlcNAc...) asparagine; by host) is linked at asparagine 286. Active-site charge relay system residues include aspartate 296 and histidine 299. Cysteine 317 and cysteine 341 are oxidised to a cystine. Asparagine 328 is a glycosylation site (N-linked (GlcNAc...) asparagine; by host). Residues 360 to 380 traverse the membrane as a helical segment; that stretch reads ILQGILLCLALLFVVFLLFLL. The Intravirion portion of the chain corresponds to 381 to 386; it reads YNDKSH.

The protein belongs to the influenza type C/coronaviruses hemagglutinin-esterase family. Homodimer; disulfide-linked. Forms a complex with the M protein in the pre-Golgi. Associates then with S-M complex to form a ternary complex S-M-HE. In terms of processing, N-glycosylated in the host RER.

It localises to the virion membrane. It is found in the host cell membrane. It catalyses the reaction N-acetyl-9-O-acetylneuraminate + H2O = N-acetylneuraminate + acetate + H(+). The enzyme catalyses N-acetyl-4-O-acetylneuraminate + H2O = N-acetylneuraminate + acetate + H(+). Its function is as follows. Structural protein that makes short spikes at the surface of the virus. Contains receptor binding and receptor-destroying activities. Mediates de-O-acetylation of N-acetyl-4-O-acetylneuraminic acid, which is probably the receptor determinant recognized by the virus on the surface of erythrocytes and susceptible cells. This receptor-destroying activity is important for virus release as it probably helps preventing self-aggregation and ensures the efficient spread of the progeny virus from cell to cell. May serve as a secondary viral attachment protein for initiating infection, the spike protein being the major one. May become a target for both the humoral and the cellular branches of the immune system. In Homo sapiens (Human), this protein is Hemagglutinin-esterase.